Reading from the N-terminus, the 276-residue chain is Glutamate racemase (276 aa).

Substrate is bound by residues D10–S11 and Y42–G43. The Proton donor/acceptor role is filled by C74. Position 75–76 (N75–T76) interacts with substrate. Catalysis depends on C185, which acts as the Proton donor/acceptor. T186–H187 lines the substrate pocket.

The protein belongs to the aspartate/glutamate racemases family.

The enzyme catalyses L-glutamate = D-glutamate. It participates in cell wall biogenesis; peptidoglycan biosynthesis. Provides the (R)-glutamate required for cell wall biosynthesis. This Levilactobacillus brevis (Lactobacillus brevis) protein is Glutamate racemase.